An 894-amino-acid chain; its full sequence is Protein translocase subunit SecA (894 aa).

ATP is bound by residues Gln87, 105–109, and Asp512; that span reads GEGKT. A disordered region spans residues 857 to 894; the sequence is FNLGDEPEAQQPVTSKKVGRNEPCPCGSGKKYKQCCGK. Zn(2+) contacts are provided by Cys880, Cys882, Cys891, and Cys892.

The protein belongs to the SecA family. In terms of assembly, monomer and homodimer. Part of the essential Sec protein translocation apparatus which comprises SecA, SecYEG and auxiliary proteins SecDF-YajC and YidC. Zn(2+) serves as cofactor.

Its subcellular location is the cell inner membrane. It is found in the cytoplasm. It catalyses the reaction ATP + H2O + cellular proteinSide 1 = ADP + phosphate + cellular proteinSide 2.. Its function is as follows. Part of the Sec protein translocase complex. Interacts with the SecYEG preprotein conducting channel. Has a central role in coupling the hydrolysis of ATP to the transfer of proteins into and across the cell membrane, serving as an ATP-driven molecular motor driving the stepwise translocation of polypeptide chains across the membrane. This is Protein translocase subunit SecA from Geotalea uraniireducens (strain Rf4) (Geobacter uraniireducens).